Here is a 928-residue protein sequence, read N- to C-terminus: DNA mismatch repair protein MutS (928 aa).

An ATP-binding site is contributed by G613–S620. Positions K854–S872 are enriched in basic and acidic residues. The tract at residues K854–S880 is disordered.

It belongs to the DNA mismatch repair MutS family.

In terms of biological role, this protein is involved in the repair of mismatches in DNA. It is possible that it carries out the mismatch recognition step. This protein has a weak ATPase activity. In Clostridium beijerinckii (strain ATCC 51743 / NCIMB 8052) (Clostridium acetobutylicum), this protein is DNA mismatch repair protein MutS.